A 476-amino-acid polypeptide reads, in one-letter code: tRNA(Ile)-lysidine synthase (476 aa).

Residue 26-31 (SGGSDS) participates in ATP binding.

Belongs to the tRNA(Ile)-lysidine synthase family.

Its subcellular location is the cytoplasm. The enzyme catalyses cytidine(34) in tRNA(Ile2) + L-lysine + ATP = lysidine(34) in tRNA(Ile2) + AMP + diphosphate + H(+). In terms of biological role, ligates lysine onto the cytidine present at position 34 of the AUA codon-specific tRNA(Ile) that contains the anticodon CAU, in an ATP-dependent manner. Cytidine is converted to lysidine, thus changing the amino acid specificity of the tRNA from methionine to isoleucine. The polypeptide is tRNA(Ile)-lysidine synthase (Bartonella quintana (strain Toulouse) (Rochalimaea quintana)).